The chain runs to 198 residues: 3-isopropylmalate dehydratase small subunit (198 aa).

It belongs to the LeuD family. LeuD type 1 subfamily. As to quaternary structure, heterodimer of LeuC and LeuD.

It carries out the reaction (2R,3S)-3-isopropylmalate = (2S)-2-isopropylmalate. Its pathway is amino-acid biosynthesis; L-leucine biosynthesis; L-leucine from 3-methyl-2-oxobutanoate: step 2/4. In terms of biological role, catalyzes the isomerization between 2-isopropylmalate and 3-isopropylmalate, via the formation of 2-isopropylmaleate. The sequence is that of 3-isopropylmalate dehydratase small subunit from Mycobacterium avium (strain 104).